Here is a 218-residue protein sequence, read N- to C-terminus: Pyridoxine/pyridoxamine 5'-phosphate oxidase (218 aa).

Residues 14-17 (RREY) and K72 contribute to the substrate site. FMN contacts are provided by residues 67-72 (RIVLLK), 82-83 (YT), R88, K89, and Q111. Y129, R133, and S137 together coordinate substrate. FMN contacts are provided by residues 146 to 147 (QS) and W191. 197-199 (RLH) lines the substrate pocket. R201 is an FMN binding site.

It belongs to the pyridoxamine 5'-phosphate oxidase family. As to quaternary structure, homodimer. FMN serves as cofactor.

It carries out the reaction pyridoxamine 5'-phosphate + O2 + H2O = pyridoxal 5'-phosphate + H2O2 + NH4(+). It catalyses the reaction pyridoxine 5'-phosphate + O2 = pyridoxal 5'-phosphate + H2O2. Its pathway is cofactor metabolism; pyridoxal 5'-phosphate salvage; pyridoxal 5'-phosphate from pyridoxamine 5'-phosphate: step 1/1. It participates in cofactor metabolism; pyridoxal 5'-phosphate salvage; pyridoxal 5'-phosphate from pyridoxine 5'-phosphate: step 1/1. Functionally, catalyzes the oxidation of either pyridoxine 5'-phosphate (PNP) or pyridoxamine 5'-phosphate (PMP) into pyridoxal 5'-phosphate (PLP). In Escherichia fergusonii (strain ATCC 35469 / DSM 13698 / CCUG 18766 / IAM 14443 / JCM 21226 / LMG 7866 / NBRC 102419 / NCTC 12128 / CDC 0568-73), this protein is Pyridoxine/pyridoxamine 5'-phosphate oxidase.